A 347-amino-acid polypeptide reads, in one-letter code: MNPLILIILLTTLILGTMMVVTSSHWLLAWIGFEMNMMAFIPIMMKNPTPRATEASTKYLLTQATASALLMMAVIINLMHSGQWTITKLFNPTASTLMTVALAIKLGLAPFHFWVPEVTQGIPLTTGLILLTWQKLAPLSILYQISPSINLHLMLIMSLLSILMGGWGGLNQTQLRKIMAYSSIAHMGWMTAILLYNPTLTLLNLLIYITMTFTMFMLFIQNSTTTTLSLSQTWNKMPVITTLTMLTLLSMGGLPPLSGFMPKWMIIQELTKNDMLIVPTFMAITALLNLYFYMRLTYSTALTLFPSTNNMKMKWQFNSTKRTPLLPTAIVISTMLLPLTPMLSILL.

11 helical membrane passes run M1–V21, H25–M45, Y59–M79, T96–P116, I122–L142, I149–G169, I178–P198, L200–I220, M237–L257, D274–M294, and L325–I345.

The protein belongs to the complex I subunit 2 family. As to quaternary structure, core subunit of respiratory chain NADH dehydrogenase (Complex I) which is composed of 45 different subunits. Interacts with TMEM242.

Its subcellular location is the mitochondrion inner membrane. The enzyme catalyses a ubiquinone + NADH + 5 H(+)(in) = a ubiquinol + NAD(+) + 4 H(+)(out). Core subunit of the mitochondrial membrane respiratory chain NADH dehydrogenase (Complex I) which catalyzes electron transfer from NADH through the respiratory chain, using ubiquinone as an electron acceptor. Essential for the catalytic activity and assembly of complex I. This chain is NADH-ubiquinone oxidoreductase chain 2, found in Balaenoptera physalus (Fin whale).